A 192-amino-acid polypeptide reads, in one-letter code: Phosphoheptose isomerase (192 aa).

An SIS domain is found at 37–192; the sequence is LADSFKAGGK…IQLIEKEMVK (156 aa). 52–54 is a binding site for substrate; sequence NGG. Zn(2+) contacts are provided by His61 and Glu65. Residues Glu65, 93-94, 119-121, Ser124, and Gln172 contribute to the substrate site; these read ND and STS. 2 residues coordinate Zn(2+): Gln172 and His180.

Belongs to the SIS family. GmhA subfamily. Homotetramer. Requires Zn(2+) as cofactor.

It is found in the cytoplasm. It catalyses the reaction 2 D-sedoheptulose 7-phosphate = D-glycero-alpha-D-manno-heptose 7-phosphate + D-glycero-beta-D-manno-heptose 7-phosphate. It functions in the pathway carbohydrate biosynthesis; D-glycero-D-manno-heptose 7-phosphate biosynthesis; D-glycero-alpha-D-manno-heptose 7-phosphate and D-glycero-beta-D-manno-heptose 7-phosphate from sedoheptulose 7-phosphate: step 1/1. In terms of biological role, catalyzes the isomerization of sedoheptulose 7-phosphate in D-glycero-D-manno-heptose 7-phosphate. The polypeptide is Phosphoheptose isomerase (Salmonella agona (strain SL483)).